The following is a 338-amino-acid chain: Glycerol-3-phosphate dehydrogenase [NAD(P)+] (338 aa).

The NADPH site is built by tryptophan 11, arginine 30, and lysine 109. Sn-glycerol 3-phosphate contacts are provided by lysine 109, glycine 143, and serine 145. Alanine 147 serves as a coordination point for NADPH. Residues lysine 198, aspartate 251, serine 261, arginine 262, and asparagine 263 each coordinate sn-glycerol 3-phosphate. Lysine 198 (proton acceptor) is an active-site residue. Residue arginine 262 participates in NADPH binding. The NADPH site is built by valine 286 and glutamate 288.

The protein belongs to the NAD-dependent glycerol-3-phosphate dehydrogenase family.

It localises to the cytoplasm. It catalyses the reaction sn-glycerol 3-phosphate + NAD(+) = dihydroxyacetone phosphate + NADH + H(+). It carries out the reaction sn-glycerol 3-phosphate + NADP(+) = dihydroxyacetone phosphate + NADPH + H(+). It participates in membrane lipid metabolism; glycerophospholipid metabolism. Its function is as follows. Catalyzes the reduction of the glycolytic intermediate dihydroxyacetone phosphate (DHAP) to sn-glycerol 3-phosphate (G3P), the key precursor for phospholipid synthesis. This chain is Glycerol-3-phosphate dehydrogenase [NAD(P)+], found in Cupriavidus necator (strain ATCC 17699 / DSM 428 / KCTC 22496 / NCIMB 10442 / H16 / Stanier 337) (Ralstonia eutropha).